The following is a 96-amino-acid chain: UPF0235 protein CAB243 (96 aa).

This sequence belongs to the UPF0235 family.

The protein is UPF0235 protein CAB243 of Chlamydia abortus (strain DSM 27085 / S26/3) (Chlamydophila abortus).